Here is a 556-residue protein sequence, read N- to C-terminus: Neurofilament light polypeptide (556 aa).

An N-acetylserine modification is found at S2. The interval 2-94 (SSYGYDPFFP…KSIRSQERAQ (93 aa)) is head. Positions 91–402 (ERAQLQDLND…KLLEGEETRL (312 aa)) constitute an IF rod domain. Residues 95 to 126 (LQDLNDRFACFIERVHELEQQNKVLEAELLVL) form a coil 1A region. A linker 1 region spans residues 127–139 (RQKHAEPSRFRAL). The coil 1B stretch occupies residues 140–235 (YEQEIRELRL…KVHEEELAEL (96 aa)). The tract at residues 236-254 (QAQIQYAHLSVEMDVSAKP) is linker 12. Residues 255 to 273 (DLSAALRDIRAQYEKLAAR) are coil 2A. Positions 274 to 282 (NMQNAEEWF) are linker 2. The coil 2B stretch occupies residues 283–398 (RSRFTVLSES…AAYRKLLEGE (116 aa)). Residues 399-445 (ETRLSFTSVGSITSGYTQTAPTFGRSAYSGLQSTSYLMTTRSFPTYY) form a tail, subdomain A region. Positions 399–556 (ETRLSFTSVG…KEETEVKKKA (158 aa)) are tail. A tail, subdomain B (acidic) region spans residues 446–556 (SSHVQEEQIE…KEETEVKKKA (111 aa)). Positions 464 to 473 (KAGEAKAAPA) are enriched in low complexity. The segment at 464-556 (KAGEAKAAPA…KEETEVKKKA (93 aa)) is disordered. A compositionally biased stretch (acidic residues) spans 474-540 (EEGEEEEKEE…AEETGEEEKE (67 aa)). Basic and acidic residues predominate over residues 541–556 (EKEAAGKEETEVKKKA).

The protein belongs to the intermediate filament family. In terms of assembly, forms homodimers (in vitro).

Its subcellular location is the cell projection. It localises to the axon. The protein resides in the cytoplasm. The protein localises to the cytoskeleton. In terms of biological role, neurofilaments usually contain three intermediate filament proteins: NEFL, NEFM, and NEFH which are involved in the maintenance of neuronal caliber. May additionally cooperate with the neuronal intermediate filament proteins to form neuronal filamentous networks. This is Neurofilament light polypeptide (NEFL) from Coturnix japonica (Japanese quail).